We begin with the raw amino-acid sequence, 259 residues long: Ferritin-2, chloroplastic (259 aa).

A chloroplast-targeting transit peptide spans 1–52 (MLLKLAPAFTLLNSHGENLSPMLSTSSQGFVLKNFSTKSRNGLLVVCASKGS). The extension peptide (EP) stretch occupies residues 53-85 (NTKPLTGVVFEPFEEVKKELMLVPTVPQVSLAR). Positions 86–239 (HKYSDQCEAA…EYVAQLRRVG (154 aa)) constitute a Ferritin-like diiron domain. Fe cation-binding residues include Glu-103, Glu-138, His-141, and Gln-221.

The protein belongs to the ferritin family. As to quaternary structure, oligomer of 24 subunits. There are two types of subunits: L (light) chain and H (heavy) chain. The major chain can be light or heavy, depending on the species and tissue type. The functional molecule forms a roughly spherical shell with a diameter of 12 nm and contains a central cavity into which the insoluble mineral iron core is deposited.

The protein resides in the plastid. It localises to the chloroplast. The enzyme catalyses 4 Fe(2+) + O2 + 4 H(+) = 4 Fe(3+) + 2 H2O. Stores iron in a soluble, non-toxic, readily available form. Important for iron homeostasis. Has ferroxidase activity. Iron is taken up in the ferrous form and deposited as ferric hydroxides after oxidation. This Nicotiana tabacum (Common tobacco) protein is Ferritin-2, chloroplastic (FER2).